The primary structure comprises 416 residues: Multifunctional CCA protein (416 aa).

The ATP site is built by Gly-8 and Arg-11. 2 residues coordinate CTP: Gly-8 and Arg-11. Positions 21 and 23 each coordinate Mg(2+). Arg-91, Arg-137, and Arg-140 together coordinate ATP. The CTP site is built by Arg-91, Arg-137, and Arg-140. One can recognise an HD domain in the interval Thr-228 to Trp-329.

It belongs to the tRNA nucleotidyltransferase/poly(A) polymerase family. Bacterial CCA-adding enzyme type 1 subfamily. Monomer. Can also form homodimers and oligomers. Mg(2+) serves as cofactor. Ni(2+) is required as a cofactor.

The enzyme catalyses a tRNA precursor + 2 CTP + ATP = a tRNA with a 3' CCA end + 3 diphosphate. It catalyses the reaction a tRNA with a 3' CCA end + 2 CTP + ATP = a tRNA with a 3' CCACCA end + 3 diphosphate. Functionally, catalyzes the addition and repair of the essential 3'-terminal CCA sequence in tRNAs without using a nucleic acid template. Adds these three nucleotides in the order of C, C, and A to the tRNA nucleotide-73, using CTP and ATP as substrates and producing inorganic pyrophosphate. tRNA 3'-terminal CCA addition is required both for tRNA processing and repair. Also involved in tRNA surveillance by mediating tandem CCA addition to generate a CCACCA at the 3' terminus of unstable tRNAs. While stable tRNAs receive only 3'-terminal CCA, unstable tRNAs are marked with CCACCA and rapidly degraded. This is Multifunctional CCA protein from Shewanella sp. (strain MR-7).